Reading from the N-terminus, the 637-residue chain is Probable ATP-binding protein YheS (637 aa).

2 consecutive ABC transporter domains span residues 2–246 (IVFS…AQQQ) and 313–527 (LKME…KQEN). ATP-binding positions include 34 to 41 (GKNGCGKS) and 345 to 352 (GRNGAGKS). The segment at 523-559 (QKQENQTDEAPKENANSAQARKDQKRREAELRAQTQP) is disordered. A compositionally biased stretch (basic and acidic residues) spans 542–553 (ARKDQKRREAEL).

Belongs to the ABC transporter superfamily. ABCF family. YheS subfamily.

Its function is as follows. Genetic data indicate it may be involved in ribosome assembly or function. The sequence is that of Probable ATP-binding protein YheS (yheS) from Escherichia coli O157:H7.